A 299-amino-acid polypeptide reads, in one-letter code: Elongation factor Ts, mitochondrial (299 aa).

The transit peptide at 1–18 (MLFQRRLHFHQFFGKTRV) directs the protein to the mitochondrion.

The protein belongs to the EF-Ts family.

It is found in the mitochondrion. In terms of biological role, associates with the EF-Tu.GDP complex and induces the exchange of GDP to GTP. It remains bound to the aminoacyl-tRNA.EF-Tu.GTP complex up to the GTP hydrolysis stage on the ribosome. The protein is Elongation factor Ts, mitochondrial (tsf1) of Schizosaccharomyces pombe (strain 972 / ATCC 24843) (Fission yeast).